A 209-amino-acid polypeptide reads, in one-letter code: Glutathione S-transferase 1-1 (209 aa).

The GST N-terminal domain occupies 1–81 (MADFYYLPGS…YLVEKYGKTD (81 aa)). Glutathione-binding positions include serine 10, 51–53 (HTI), and 65–67 (ESR). The 123-residue stretch at 87 to 209 (CPKKRAVINQ…GCLEFKKFFE (123 aa)) folds into the GST C-terminal domain.

The protein belongs to the GST superfamily. Theta family. As to quaternary structure, homodimer.

It catalyses the reaction RX + glutathione = an S-substituted glutathione + a halide anion + H(+). The enzyme catalyses 1,1,1-trichloro-2,2-bis(4-chlorophenyl)ethane = 1,1-dichloro-2,2-bis(4-chlorophenyl)ethylene + chloride + H(+). Functionally, conjugation of reduced glutathione to a wide number of exogenous and endogenous hydrophobic electrophiles. Has DDT dehydrochlorinase activity. The chain is Glutathione S-transferase 1-1 (GstD1) from Drosophila sechellia (Fruit fly).